A 362-amino-acid polypeptide reads, in one-letter code: Carbamoyl phosphate synthase small chain (362 aa).

A CPSase region spans residues methionine 1 to valine 169. Residues serine 46, glycine 220, and glycine 222 each coordinate L-glutamine. The Glutamine amidotransferase type-1 domain occupies asparagine 172–glutamate 358. The active-site Nucleophile is the cysteine 247. Positions 248, 251, 289, 291, and 292 each coordinate L-glutamine. Residues histidine 331 and aspartate 333 contribute to the active site.

This sequence belongs to the CarA family. Composed of two chains; the small (or glutamine) chain promotes the hydrolysis of glutamine to ammonia, which is used by the large (or ammonia) chain to synthesize carbamoyl phosphate. Tetramer of heterodimers (alpha,beta)4.

The enzyme catalyses hydrogencarbonate + L-glutamine + 2 ATP + H2O = carbamoyl phosphate + L-glutamate + 2 ADP + phosphate + 2 H(+). It carries out the reaction L-glutamine + H2O = L-glutamate + NH4(+). It functions in the pathway amino-acid biosynthesis; L-arginine biosynthesis; carbamoyl phosphate from bicarbonate: step 1/1. It participates in pyrimidine metabolism; UMP biosynthesis via de novo pathway; (S)-dihydroorotate from bicarbonate: step 1/3. Its function is as follows. Small subunit of the glutamine-dependent carbamoyl phosphate synthetase (CPSase). CPSase catalyzes the formation of carbamoyl phosphate from the ammonia moiety of glutamine, carbonate, and phosphate donated by ATP, constituting the first step of 2 biosynthetic pathways, one leading to arginine and/or urea and the other to pyrimidine nucleotides. The small subunit (glutamine amidotransferase) binds and cleaves glutamine to supply the large subunit with the substrate ammonia. The protein is Carbamoyl phosphate synthase small chain of Streptococcus mutans serotype c (strain ATCC 700610 / UA159).